Reading from the N-terminus, the 566-residue chain is Proline--tRNA ligase (566 aa).

This sequence belongs to the class-II aminoacyl-tRNA synthetase family. ProS type 1 subfamily. In terms of assembly, homodimer.

Its subcellular location is the cytoplasm. The enzyme catalyses tRNA(Pro) + L-proline + ATP = L-prolyl-tRNA(Pro) + AMP + diphosphate. Catalyzes the attachment of proline to tRNA(Pro) in a two-step reaction: proline is first activated by ATP to form Pro-AMP and then transferred to the acceptor end of tRNA(Pro). As ProRS can inadvertently accommodate and process non-cognate amino acids such as alanine and cysteine, to avoid such errors it has two additional distinct editing activities against alanine. One activity is designated as 'pretransfer' editing and involves the tRNA(Pro)-independent hydrolysis of activated Ala-AMP. The other activity is designated 'posttransfer' editing and involves deacylation of mischarged Ala-tRNA(Pro). The misacylated Cys-tRNA(Pro) is not edited by ProRS. This chain is Proline--tRNA ligase, found in Bacillus cytotoxicus (strain DSM 22905 / CIP 110041 / 391-98 / NVH 391-98).